The primary structure comprises 418 residues: UDP-N-acetylglucosamine 1-carboxyvinyltransferase (418 aa).

23–24 (KN) lines the phosphoenolpyruvate pocket. Residue Arg93 coordinates UDP-N-acetyl-alpha-D-glucosamine. Asp117 serves as the catalytic Proton donor. Residues Asp305 and Ile327 each coordinate UDP-N-acetyl-alpha-D-glucosamine.

Belongs to the EPSP synthase family. MurA subfamily.

It localises to the cytoplasm. It carries out the reaction phosphoenolpyruvate + UDP-N-acetyl-alpha-D-glucosamine = UDP-N-acetyl-3-O-(1-carboxyvinyl)-alpha-D-glucosamine + phosphate. It functions in the pathway cell wall biogenesis; peptidoglycan biosynthesis. In terms of biological role, cell wall formation. Adds enolpyruvyl to UDP-N-acetylglucosamine. The chain is UDP-N-acetylglucosamine 1-carboxyvinyltransferase from Corynebacterium jeikeium (strain K411).